The following is a 102-amino-acid chain: uncharacterized protein (102 aa).

3 helical membrane passes run 14-34 (IKNW…VISA), 35-55 (VAFT…LILI), and 76-96 (ILSI…HCYI).

It is found in the cell membrane. This is an uncharacterized protein from Methanocaldococcus jannaschii (strain ATCC 43067 / DSM 2661 / JAL-1 / JCM 10045 / NBRC 100440) (Methanococcus jannaschii).